The sequence spans 107 residues: Nucleoid-associated protein A1C_06705 (107 aa).

It belongs to the YbaB/EbfC family. Homodimer.

The protein resides in the cytoplasm. Its subcellular location is the nucleoid. Functionally, binds to DNA and alters its conformation. May be involved in regulation of gene expression, nucleoid organization and DNA protection. This chain is Nucleoid-associated protein A1C_06705, found in Rickettsia akari (strain Hartford).